Reading from the N-terminus, the 256-residue chain is uncharacterized protein (256 aa).

The N-terminal stretch at Met1 to Gly24 is a signal peptide. Cys25 is lipidated: N-palmitoyl cysteine. A lipid anchor (S-diacylglycerol cysteine) is attached at Cys25.

Belongs to the staphylococcal tandem lipoprotein family.

It localises to the cell membrane. This is an uncharacterized protein from Staphylococcus aureus.